Consider the following 229-residue polypeptide: Small ribosomal subunit protein uS3 (229 aa).

The 69-residue stretch at 39–107 folds into the KH type-2 domain; the sequence is VRQFLIKELK…PAQINISEVR (69 aa).

This sequence belongs to the universal ribosomal protein uS3 family. In terms of assembly, part of the 30S ribosomal subunit. Forms a tight complex with proteins S10 and S14.

Its function is as follows. Binds the lower part of the 30S subunit head. Binds mRNA in the 70S ribosome, positioning it for translation. The protein is Small ribosomal subunit protein uS3 of Photobacterium profundum (strain SS9).